Reading from the N-terminus, the 563-residue chain is Anaerobic glycerol-3-phosphate dehydrogenase subunit A (563 aa).

20–48 (DVIIIGGGATGAGIARDCALRGIDCILLE) contacts FAD.

It belongs to the FAD-dependent glycerol-3-phosphate dehydrogenase family. As to quaternary structure, composed of a catalytic GlpA/B dimer and of membrane bound GlpC. Requires FAD as cofactor. It depends on FMN as a cofactor.

It is found in the cell inner membrane. It catalyses the reaction a quinone + sn-glycerol 3-phosphate = dihydroxyacetone phosphate + a quinol. The protein operates within polyol metabolism; glycerol degradation via glycerol kinase pathway; glycerone phosphate from sn-glycerol 3-phosphate (anaerobic route): step 1/1. In Haemophilus influenzae (strain ATCC 51907 / DSM 11121 / KW20 / Rd), this protein is Anaerobic glycerol-3-phosphate dehydrogenase subunit A (glpA).